Consider the following 249-residue polypeptide: Dihydroneopterin 2',3'-cyclic phosphate phosphodiesterase (249 aa).

Positions 58-172 (LIEHTISVTK…VHYADEADSK (115 aa)) constitute an HD domain.

Homododecamer. Fe(2+) is required as a cofactor. Requires Zn(2+) as cofactor.

It catalyses the reaction 7,8-dihydroneopterin 2',3'-cyclic phosphate + H2O = 7,8-dihydroneopterin 3'-phosphate + H(+). The enzyme catalyses 7,8-dihydroneopterin 2',3'-cyclic phosphate + H2O = 7,8-dihydroneopterin 2'-phosphate + H(+). The protein operates within cofactor biosynthesis; 5,6,7,8-tetrahydromethanopterin biosynthesis. In terms of biological role, cyclic phosphodiesterase that hydrolyzes the cyclic phosphate of 7,8-dihydroneopterin 2',3'-cyclic phosphate (H2N-cP) and converts it to a mixture of 7,8-dihydroneopterin 2'-phosphate (H2N-2'P) and 7,8-dihydroneopterin 3'-phosphate (H2N-3'P). Is also able to utilize other phosphodiesters as substrates in vitro: hydrolysis of bis-pNPP and pNPPC produces nitrophenyl phosphate, and that of 2',3'-cAMP produces 3'-AMP. ATP, 3',5'-cAMP, GTP, 3',5'-cGMP, and 4',5'-cFMN cannot serve as substrates. This is Dihydroneopterin 2',3'-cyclic phosphate phosphodiesterase (mptB) from Methanocaldococcus jannaschii (strain ATCC 43067 / DSM 2661 / JAL-1 / JCM 10045 / NBRC 100440) (Methanococcus jannaschii).